Consider the following 256-residue polypeptide: Agamous-like MADS-box protein AGL18 (256 aa).

In terms of domain architecture, MADS-box spans 1 to 61 (MGRGRIEIKK…GKIYDFSSVC (61 aa)). The K-box domain maps to 94 to 184 (NEAVLRNDDS…RKQVEMLGRG (91 aa)). The disordered stretch occupies residues 179-232 (EMLGRGSGPKVLNERPQDSSPEADPESSSSEEDENDNEEHHSDTSLQLGLSSTG). The span at 199 to 215 (PEADPESSSSEEDENDN) shows a compositional bias: acidic residues. A compositionally biased stretch (polar residues) spans 222–232 (TSLQLGLSSTG).

In terms of tissue distribution, mostly expressed in pollen, roots, flowers and siliques, and to a lower extent, in stems and leaves. Expressed in the endosperm and in developing male and female gametophytes. Also present in seedlings.

Its subcellular location is the nucleus. Its function is as follows. Probable transcription factor involved in the negative regulation of flowering, probably through the photoperiodic pathway. Prevents premature flowering. Downstream regulator of a subset of the MIKC* MADS-controlled genes required during pollen maturation. The protein is Agamous-like MADS-box protein AGL18 (AGL18) of Arabidopsis thaliana (Mouse-ear cress).